Consider the following 499-residue polypeptide: NAD(P)H-quinone oxidoreductase chain 4, chloroplastic (499 aa).

14 consecutive transmembrane segments (helical) span residues phenylalanine 4–leucine 24, tyrosine 35–phenylalanine 55, glycine 84–alanine 104, serine 111–phenylalanine 129, leucine 134–valine 154, phenylalanine 167–leucine 187, alanine 208–isoleucine 228, histidine 242–isoleucine 262, alanine 272–alanine 292, isoleucine 305–aspartate 325, glycine 330–glycine 350, leucine 386–threonine 406, isoleucine 416–methionine 436, and leucine 462–valine 482.

It belongs to the complex I subunit 4 family.

Its subcellular location is the plastid. It localises to the chloroplast thylakoid membrane. The enzyme catalyses a plastoquinone + NADH + (n+1) H(+)(in) = a plastoquinol + NAD(+) + n H(+)(out). It carries out the reaction a plastoquinone + NADPH + (n+1) H(+)(in) = a plastoquinol + NADP(+) + n H(+)(out). This Citrus sinensis (Sweet orange) protein is NAD(P)H-quinone oxidoreductase chain 4, chloroplastic.